The chain runs to 294 residues: Indole-3-glycerol phosphate synthase (294 aa).

Belongs to the TrpC family.

It carries out the reaction 1-(2-carboxyphenylamino)-1-deoxy-D-ribulose 5-phosphate + H(+) = (1S,2R)-1-C-(indol-3-yl)glycerol 3-phosphate + CO2 + H2O. It participates in amino-acid biosynthesis; L-tryptophan biosynthesis; L-tryptophan from chorismate: step 4/5. The polypeptide is Indole-3-glycerol phosphate synthase (Crocosphaera subtropica (strain ATCC 51142 / BH68) (Cyanothece sp. (strain ATCC 51142))).